We begin with the raw amino-acid sequence, 724 residues long: MVLTLLFSAYKLCRFFTMSGPRPGADRLTVPGPDRSGGASPWWAAGGRGSREVSPGVGTEVQGALERSLPELQQALSELKQASAARAVGAGLAEVFQLVEEAWLLPAVGREVAQGLCDAIRLDGGLDLLLRLLQAPELETRVQAARLLEQILVAENRDRVARIGLGVILNLAKEREPVELARSVAGILEHMFKHSEETCQRLVAAGGLDAVLYWCRRTDPALLRHCALALANCALHGGQTVQRCMVEKRAAEWLFPLAFSKEDELLRLHACLAVAVLATNKEVEREVEHSGTLALVEPLVASLDPGRFARCLVDASDTSQGRGPDDLQSLVLLLDSSRLEAQCIGAFYLCAEAAIKSLQGKTKVFSDIGAIQSLKRLVSYSTNGTTSALAKRALRLLGEEVPRRILPCVASWKEAEVQTWLQQIGFSQYCENFREQQVDGDLLLRLTDEELQTDLGMKSSITRKRFFRELTELKTFASYATCDRSNLADWLGSLDPRFRQYTYGLVSCGLDRSLLHRVSEQQLLEDCGIRLGVHRTRILSAAREMLHSPLPCTGGKLSGDTPDVFISYRRNSGSQLASLLKVHLQLHGFSVFIDVEKLEAGKFEDKLIQSVIAARNFVLVLSAGALDKCMQDHDCKDWVHKEIVTALSCGKNIVPIIDGFEWPEPQALPEDMQAVLTFNGIKWSHEYQEATIEKIIRFLQGRPSQDSSAGSDTSLEGATPMGLP.

A mitochondrion-targeting transit peptide spans 1–27 (MVLTLLFSAYKLCRFFTMSGPRPGADR). The interval 24-56 (GADRLTVPGPDRSGGASPWWAAGGRGSREVSPG) is disordered. The segment covering 36-45 (SGGASPWWAA) has biased composition (low complexity). Residues 60-100 (EVQGALERSLPELQQALSELKQASAARAVGAGLAEVFQLVE) form an ARM 1 repeat. Residues tryptophan 103, arginine 110, 149 to 157 (EQILVAENR), and 190 to 193 (HMFK) contribute to the NAD(+) site. 7 ARM repeats span residues 114-153 (QGLC…QILV), 155-193 (ENRD…HMFK), 196-235 (EETC…NCAL), 237-280 (GGQT…LATN), 281-314 (KEVE…CLVD), 315-354 (ASDT…AEAA), and 359-402 (QGKT…EEVP). SAM domains are found at residues 412-476 (WKEA…LKTF) and 486-548 (NLAD…MLHS). Serine 548 and serine 558 each carry phosphoserine. Positions 560–703 (DTPDVFISYR…KIIRFLQGRP (144 aa)) constitute a TIR domain. NAD(+) is bound by residues 569-570 (RR) and glutamate 599. The active site involves glutamate 642. Positions 703 to 716 (PSQDSSAGSDTSLE) are enriched in polar residues. Residues 703 to 724 (PSQDSSAGSDTSLEGATPMGLP) form a disordered region.

It belongs to the SARM1 family. As to quaternary structure, homooctamer; forms an octameric ring via SAM domains. Interacts with TICAM1/TRIF and thereby interferes with TICAM1/TRIF function. Interacts with SDC2 (via cytoplasmic domain) and MAPK10/JNK3. Post-translationally, phosphorylation at Ser-548 by JNK kinases (MAPK8, MAPK9 and /or MAPK10) enhance the NAD(+) hydrolase (NADase) activity. Phosphorylation at Ser-548 and subsequent activation takes place in response to oxidative stress conditions and inhibits mitochondrial respiration. As to expression, widely expressed in the brain and neurons (at protein level). Expressed in photoreceptor cells of the neural retina.

It is found in the cytoplasm. The protein resides in the cell projection. Its subcellular location is the axon. It localises to the dendrite. The protein localises to the synapse. It is found in the mitochondrion. The catalysed reaction is NAD(+) + H2O = ADP-D-ribose + nicotinamide + H(+). The enzyme catalyses NAD(+) = cyclic ADP-beta-D-ribose + nicotinamide + H(+). It catalyses the reaction NADP(+) + H2O = ADP-D-ribose 2'-phosphate + nicotinamide + H(+). Autoinhibited: in the inactive state, the enzymatic TIR domain is held apart by the autoinhibiting ARM repeats. NAD(+)-binding to ARM repeats maintains an inactive state by promoting interaction between ARM repeats and the TIR domain, thereby facilitating inhibition of the enzymatic TIR domain. Following activation, possibly by nicotinamide mononucleotide (NMN), auto-inhibitory interactions are released, allowing self-association of the TIR domains and subsequent activation of the NAD(+) hydrolase (NADase) activity. Self-association of TIR domains is facilitated by the octamer of SAM domains. Functionally, NAD(+) hydrolase, which plays a key role in axonal degeneration following injury by regulating NAD(+) metabolism. Acts as a negative regulator of MYD88- and TRIF-dependent toll-like receptor signaling pathway by promoting Wallerian degeneration, an injury-induced form of programmed subcellular death which involves degeneration of an axon distal to the injury site. Wallerian degeneration is triggered by NAD(+) depletion: in response to injury, SARM1 is activated and catalyzes cleavage of NAD(+) into ADP-D-ribose (ADPR), cyclic ADPR (cADPR) and nicotinamide; NAD(+) cleavage promoting cytoskeletal degradation and axon destruction. Also able to hydrolyze NADP(+), but not other NAD(+)-related molecules. Can activate neuronal cell death in response to stress. Regulates dendritic arborization through the MAPK4-JNK pathway. Involved in innate immune response: inhibits both TICAM1/TRIF- and MYD88-dependent activation of JUN/AP-1, TRIF-dependent activation of NF-kappa-B and IRF3, and the phosphorylation of MAPK14/p38. The protein is NAD(+) hydrolase SARM1 of Mus musculus (Mouse).